A 314-amino-acid polypeptide reads, in one-letter code: Protein SPOROCYTELESS (314 aa).

A compositionally biased stretch (polar residues) spans 1 to 17; that stretch reads MATSLFFMSTDQNSVGN. Disordered regions lie at residues 1–20 and 33–62; these read MATS…NPND and GEIR…PTLR. The SPL signature appears at 62–70; the sequence is RGMGVAKLE. The EAR signature appears at 308–314; it reads IDLSLKL.

This sequence belongs to the NOZZLE family. Homodimer and heterodimer with SPEARs. Interacts in vitro with YAB1, YAB3 and YAB4. Interacts (via EAR motif) with TPL, TPR1, TPR2, TPR3 and TPR4. Interacts with SPEAR1, SPEAR2, SPEAR3, SPEAR4, TCP1, TCP6, TCP8, TCP9, TCP11, TCP15, TCP20, TCP21 and TCP23. Interacts with TCP2, TCP3, TCP4, TCP5, TCP10, TCP13, TCP17 and TCP24. Expressed in flower buds. Not found in leaves, siliques and stems. Detected in rosette leaves, stem tissue and seedlings.

The protein localises to the nucleus. In terms of biological role, transcriptional regulator of sporocyte development. Acts as an adapter-like transcriptional repressor recruiting TPL/TPR corepressors to inhibit TCP transcription factors. Required for nucellus and embryo sac development. Plays a central role in patterning both the proximal-distal and the adaxial-abaxial axes during ovule development. Involved in establishing the prospective chalaza of the ovule and in controlling the cell number and the length of the funiculus, and is required for the development of the integuments. Required, with BEL1, for cytokinin-induced PIN1 expression in ovules. Involved in controlling stamen identity. May also regulate the morphology of lateral organs by repressing auxin production. This is Protein SPOROCYTELESS from Arabidopsis thaliana (Mouse-ear cress).